The chain runs to 198 residues: DnaJ homolog subfamily C member 12 (198 aa).

Methionine 1 carries the post-translational modification N-acetylmethionine. Residues 14–79 (DYYTLLGCDE…ASRARYDHWR (66 aa)) form the J domain. The segment at 112 to 167 (MLEESDQTPTDKIENEEQDEQKEIKKEEFGSTTEKMEQKESKSVEKSFSPQNPDSP) is disordered. Positions 120 to 156 (PTDKIENEEQDEQKEIKKEEFGSTTEKMEQKESKSVE) are enriched in basic and acidic residues. A phosphoserine mark is found at serine 160, serine 166, and serine 182.

As to quaternary structure, interacts with HSPA8. Interacts with TPH1. Interacts with TPH2.

It is found in the cytoplasm. Probable co-chaperone that participates in the proper folding of biopterin-dependent aromatic amino acid hydroxylases, which include phenylalanine-4-hydroxylase (PAH), tyrosine 3-monooxygenase (TH) and peripheral and neuronal tryptophan hydroxylases (TPH1 and TPH2). The sequence is that of DnaJ homolog subfamily C member 12 (DNAJC12) from Bos taurus (Bovine).